Consider the following 126-residue polypeptide: Allergen Tha p 1 (126 aa).

An N-terminal signal peptide occupies residues 1 to 18; sequence MKLLILALTCAAAVWARP.

Belongs to the insect A10/OS-D protein family.

It localises to the secreted. In Thaumetopoea pityocampa (Pine processionary moth), this protein is Allergen Tha p 1.